A 229-amino-acid chain; its full sequence is 7-cyano-7-deazaguanine synthase (229 aa).

12–22 (LSGGMDSCVCA) provides a ligand contact to ATP. Residues Cys194, Cys202, Cys205, and Cys208 each contribute to the Zn(2+) site.

It belongs to the QueC family. Zn(2+) serves as cofactor.

It catalyses the reaction 7-carboxy-7-deazaguanine + NH4(+) + ATP = 7-cyano-7-deazaguanine + ADP + phosphate + H2O + H(+). The protein operates within purine metabolism; 7-cyano-7-deazaguanine biosynthesis. In terms of biological role, catalyzes the ATP-dependent conversion of 7-carboxy-7-deazaguanine (CDG) to 7-cyano-7-deazaguanine (preQ(0)). This chain is 7-cyano-7-deazaguanine synthase, found in Acidobacterium capsulatum (strain ATCC 51196 / DSM 11244 / BCRC 80197 / JCM 7670 / NBRC 15755 / NCIMB 13165 / 161).